The following is a 289-amino-acid chain: Energy-coupling factor transporter ATP-binding protein EcfA2 (289 aa).

The 245-residue stretch at 7–251 (IILDNVSYTY…IELLTKIEID (245 aa)) folds into the ABC transporter domain. 44-51 (GTTGSGKS) is a binding site for ATP.

This sequence belongs to the ABC transporter superfamily. Energy-coupling factor EcfA family. Forms a stable energy-coupling factor (ECF) transporter complex composed of 2 membrane-embedded substrate-binding proteins (S component), 2 ATP-binding proteins (A component) and 2 transmembrane proteins (T component).

The protein localises to the cell membrane. Functionally, ATP-binding (A) component of a common energy-coupling factor (ECF) ABC-transporter complex. Unlike classic ABC transporters this ECF transporter provides the energy necessary to transport a number of different substrates. This chain is Energy-coupling factor transporter ATP-binding protein EcfA2, found in Mycoplasma capricolum subsp. capricolum (strain California kid / ATCC 27343 / NCTC 10154).